The chain runs to 206 residues: Small ribosomal subunit protein uS4 (206 aa).

The interval 28–48 (YMERRPYGPGEHGRARKKQDS) is disordered. The region spanning 95 to 160 (MRLDALVLRA…MPPFQVAAAG (66 aa)) is the S4 RNA-binding domain.

The protein belongs to the universal ribosomal protein uS4 family. Part of the 30S ribosomal subunit. Contacts protein S5. The interaction surface between S4 and S5 is involved in control of translational fidelity.

Functionally, one of the primary rRNA binding proteins, it binds directly to 16S rRNA where it nucleates assembly of the body of the 30S subunit. With S5 and S12 plays an important role in translational accuracy. The protein is Small ribosomal subunit protein uS4 of Paenarthrobacter aurescens (strain TC1).